A 155-amino-acid chain; its full sequence is uncharacterized protein (155 aa).

The N-terminal 17 residues, 1–17 (MMRGASKRSISSAAVLL), are a transit peptide targeting the mitochondrion. Positions 111-155 (WHRQQKRSQRRRSVAKYEQREEAARVEKEEREARDREMVRELFRR) are disordered. Over residues 113-124 (RQQKRSQRRRSV) the composition is skewed to basic residues. The segment covering 125–155 (AKYEQREEAARVEKEEREARDREMVRELFRR) has biased composition (basic and acidic residues).

Belongs to the prokaryotic/mitochondrial release factor family.

The protein localises to the mitochondrion. This is an uncharacterized protein from Saccharomyces cerevisiae (strain ATCC 204508 / S288c) (Baker's yeast).